A 464-amino-acid polypeptide reads, in one-letter code: Histidine--tRNA ligase (464 aa).

It belongs to the class-II aminoacyl-tRNA synthetase family. As to quaternary structure, homodimer.

It localises to the cytoplasm. The enzyme catalyses tRNA(His) + L-histidine + ATP = L-histidyl-tRNA(His) + AMP + diphosphate + H(+). The polypeptide is Histidine--tRNA ligase (Stenotrophomonas maltophilia (strain K279a)).